The sequence spans 508 residues: MTRALLSVSDKTGLVPFAEKLVALGYELVSTGGTHRVLAAAGLDVIAIDDVTDFPEMLDGRVKTLHPRVHAGLLARRDLPEHMAKMAEFDITPIDMVVVNLYPFKSTIQKDGVTEAEAIENIDIGGPSMLRSAAKNFAGVLPIVDPADYDVVVDKLQSGSIDADYRKSLAAKVFQHTAAYDALIADYLTVAEFPNNLTLPYEKFDDMRYGENPHQKAAAYKTALPEDYSVLNANILHGKQLSYNNIRDADAALRIIAEFEETTVVTVKHMNPAGIGQGSTIETAWDKAFAADDVSIFGGIVALNREVDAATAEKMHAIFLEIIIAPSFTPEAFDILSAKKNLRLLTVPFTTTVPQKLEVTSVLGGVVVQERDLYTESKANFEVVSKVQPTEAQLRAMIFAQKVVKHVKSNAIIVARDGQTLGMGAGQPNRIDSVVYAIQKAAVKSGFDEAVLASDAFFPMDDSVQYAAENGIRAVVEPGGSIKDKDSIAKADELGIALVFSGTRHFKH.

An MGS-like domain is found at Met-1 to Val-144.

The protein belongs to the PurH family.

It catalyses the reaction (6R)-10-formyltetrahydrofolate + 5-amino-1-(5-phospho-beta-D-ribosyl)imidazole-4-carboxamide = 5-formamido-1-(5-phospho-D-ribosyl)imidazole-4-carboxamide + (6S)-5,6,7,8-tetrahydrofolate. It carries out the reaction IMP + H2O = 5-formamido-1-(5-phospho-D-ribosyl)imidazole-4-carboxamide. Its pathway is purine metabolism; IMP biosynthesis via de novo pathway; 5-formamido-1-(5-phospho-D-ribosyl)imidazole-4-carboxamide from 5-amino-1-(5-phospho-D-ribosyl)imidazole-4-carboxamide (10-formyl THF route): step 1/1. It participates in purine metabolism; IMP biosynthesis via de novo pathway; IMP from 5-formamido-1-(5-phospho-D-ribosyl)imidazole-4-carboxamide: step 1/1. This Leuconostoc citreum (strain KM20) protein is Bifunctional purine biosynthesis protein PurH.